Here is a 346-residue protein sequence, read N- to C-terminus: Coproporphyrin III ferrochelatase (346 aa).

Fe-coproporphyrin III contacts are provided by S52 and Y121. The Fe(2+) site is built by H181 and E264.

It belongs to the ferrochelatase family.

The protein resides in the cytoplasm. The enzyme catalyses Fe-coproporphyrin III + 2 H(+) = coproporphyrin III + Fe(2+). It functions in the pathway porphyrin-containing compound metabolism; protoheme biosynthesis. Functionally, involved in coproporphyrin-dependent heme b biosynthesis. Catalyzes the insertion of ferrous iron into coproporphyrin III to form Fe-coproporphyrin III. The protein is Coproporphyrin III ferrochelatase of Mycobacterium sp. (strain JLS).